Here is a 517-residue protein sequence, read N- to C-terminus: Ribose import ATP-binding protein RbsA 1 (517 aa).

ABC transporter domains follow at residues 11–251 and 263–507; these read LEMR…VGRD and YDPG…ALAT. 43–50 is an ATP binding site; the sequence is GENGAGKS.

This sequence belongs to the ABC transporter superfamily. Ribose importer (TC 3.A.1.2.1) family. In terms of assembly, the complex is composed of an ATP-binding protein (RbsA), two transmembrane proteins (RbsC) and a solute-binding protein (RbsB).

It is found in the cell inner membrane. The catalysed reaction is D-ribose(out) + ATP + H2O = D-ribose(in) + ADP + phosphate + H(+). Part of the ABC transporter complex RbsABC involved in ribose import. Responsible for energy coupling to the transport system. The chain is Ribose import ATP-binding protein RbsA 1 from Burkholderia cenocepacia (strain HI2424).